Reading from the N-terminus, the 364-residue chain is Acetylserotonin O-methyltransferase 1 (364 aa).

Residues G208, D231, D251, and K265 each coordinate S-adenosyl-L-homocysteine. Catalysis depends on H269, which acts as the Proton acceptor. Active-site residues include E300 and E330.

Belongs to the class I-like SAM-binding methyltransferase superfamily. Cation-independent O-methyltransferase family. As to quaternary structure, homodimer. As to expression, expressed in leaves, stems and flowers.

It localises to the cytoplasm. The enzyme catalyses N-acetylserotonin + S-adenosyl-L-methionine = melatonin + S-adenosyl-L-homocysteine + H(+). Its pathway is aromatic compound metabolism; melatonin biosynthesis; melatonin from serotonin: step 1/2. Functionally, methyltransferase which catalyzes the transfer of a methyl group onto N-acetylserotonin, producing melatonin (N-acetyl-5-methoxytryptamine). This Oryza sativa subsp. japonica (Rice) protein is Acetylserotonin O-methyltransferase 1.